We begin with the raw amino-acid sequence, 126 residues long: UPF0235 protein C15orf40 homolog (126 aa).

Residues methionine 1–lysine 33 form a disordered region. Serine 89 is subject to Phosphoserine.

The protein belongs to the UPF0235 family.

In Rattus norvegicus (Rat), this protein is UPF0235 protein C15orf40 homolog.